The sequence spans 347 residues: Holliday junction branch migration complex subunit RuvB (347 aa).

Residues Met1 to Arg10 are compositionally biased toward polar residues. Positions Met1 to Gln29 are disordered. Residues Pro13–Tyr198 form a large ATPase domain (RuvB-L) region. Leu37, Arg38, Gly79, Lys82, Thr83, Thr84, Arg188, Tyr198, and Arg235 together coordinate ATP. Thr83 contacts Mg(2+). The tract at residues Gly199–Arg270 is small ATPAse domain (RuvB-S). Residues His273 to Ala347 are head domain (RuvB-H). Arg328 and Arg333 together coordinate DNA.

This sequence belongs to the RuvB family. As to quaternary structure, homohexamer. Forms an RuvA(8)-RuvB(12)-Holliday junction (HJ) complex. HJ DNA is sandwiched between 2 RuvA tetramers; dsDNA enters through RuvA and exits via RuvB. An RuvB hexamer assembles on each DNA strand where it exits the tetramer. Each RuvB hexamer is contacted by two RuvA subunits (via domain III) on 2 adjacent RuvB subunits; this complex drives branch migration. In the full resolvosome a probable DNA-RuvA(4)-RuvB(12)-RuvC(2) complex forms which resolves the HJ.

It is found in the cytoplasm. It carries out the reaction ATP + H2O = ADP + phosphate + H(+). Its function is as follows. The RuvA-RuvB-RuvC complex processes Holliday junction (HJ) DNA during genetic recombination and DNA repair, while the RuvA-RuvB complex plays an important role in the rescue of blocked DNA replication forks via replication fork reversal (RFR). RuvA specifically binds to HJ cruciform DNA, conferring on it an open structure. The RuvB hexamer acts as an ATP-dependent pump, pulling dsDNA into and through the RuvAB complex. RuvB forms 2 homohexamers on either side of HJ DNA bound by 1 or 2 RuvA tetramers; 4 subunits per hexamer contact DNA at a time. Coordinated motions by a converter formed by DNA-disengaged RuvB subunits stimulates ATP hydrolysis and nucleotide exchange. Immobilization of the converter enables RuvB to convert the ATP-contained energy into a lever motion, pulling 2 nucleotides of DNA out of the RuvA tetramer per ATP hydrolyzed, thus driving DNA branch migration. The RuvB motors rotate together with the DNA substrate, which together with the progressing nucleotide cycle form the mechanistic basis for DNA recombination by continuous HJ branch migration. Branch migration allows RuvC to scan DNA until it finds its consensus sequence, where it cleaves and resolves cruciform DNA. The protein is Holliday junction branch migration complex subunit RuvB of Synechococcus sp. (strain CC9902).